The chain runs to 306 residues: tRNA dimethylallyltransferase (306 aa).

Residue 9-16 (GPTAIGKT) coordinates ATP. 11 to 16 (TAIGKT) is a substrate binding site. Residues 34–37 (DSMQ) form an interaction with substrate tRNA region.

It belongs to the IPP transferase family. As to quaternary structure, monomer. Mg(2+) serves as cofactor.

The enzyme catalyses adenosine(37) in tRNA + dimethylallyl diphosphate = N(6)-dimethylallyladenosine(37) in tRNA + diphosphate. Functionally, catalyzes the transfer of a dimethylallyl group onto the adenine at position 37 in tRNAs that read codons beginning with uridine, leading to the formation of N6-(dimethylallyl)adenosine (i(6)A). The protein is tRNA dimethylallyltransferase of Lactobacillus helveticus (strain DPC 4571).